A 205-amino-acid polypeptide reads, in one-letter code: Dephospho-CoA kinase (205 aa).

The DPCK domain occupies 6 to 205 (RIGLTGGIAA…EIYAGWCAGR (200 aa)). ATP is bound at residue 14–19 (AAGKST).

The protein belongs to the CoaE family.

The protein localises to the cytoplasm. It carries out the reaction 3'-dephospho-CoA + ATP = ADP + CoA + H(+). It participates in cofactor biosynthesis; coenzyme A biosynthesis; CoA from (R)-pantothenate: step 5/5. Catalyzes the phosphorylation of the 3'-hydroxyl group of dephosphocoenzyme A to form coenzyme A. This is Dephospho-CoA kinase from Bifidobacterium longum (strain NCC 2705).